A 203-amino-acid polypeptide reads, in one-letter code: Pectinesterase inhibitor 12 (203 aa).

An N-terminal signal peptide occupies residues 1 to 26 (MRMSKALAAVVAISVSLSAAAMGVDA). Intrachain disulfides connect Cys32-Cys47 and Cys100-Cys140.

It belongs to the PMEI family.

It is found in the secreted. The protein resides in the extracellular space. Its subcellular location is the apoplast. Pectin methylesterase (PME) inhibitor that inhibits PME in vitro. In Oryza sativa subsp. japonica (Rice), this protein is Pectinesterase inhibitor 12.